We begin with the raw amino-acid sequence, 315 residues long: MNKMNRLSHNTEIRNAIYSGVGIGISGNSFLLLFHIFKYIRGQRSRHIDLPIGLLSLIHLVMLIAMSLVATDIFMPWGRWGDTTCKCVISLYRFCRSLSLCATSLLSILQAVTLNPRNSCLEKFKRKSPHYMLGCLLFLSVFYTFISSPLATYITAKSNLTSPSFTYITTSCSLAPMSYSFHLTVFILLTSRDVIFVGLMLLSSGYMVTFLGRHKKQSQFLHITSFSLKPSAEKRAMRTILCLMSFFVLMYTLDSIVSYIRSIDDGQIFYCVHIFTAHGYATVSPFLILSTEKYIINIFRSTFGRMVTIILLRNR.

The Extracellular segment spans residues 1–15 (MNKMNRLSHNTEIRN). Residues 16–40 (AIYSGVGIGISGNSFLLLFHIFKYI) form a helical membrane-spanning segment. The Cytoplasmic segment spans residues 41-51 (RGQRSRHIDLP). Residues 52–71 (IGLLSLIHLVMLIAMSLVAT) form a helical membrane-spanning segment. Topologically, residues 72–90 (DIFMPWGRWGDTTCKCVIS) are extracellular. Cys85 and Cys172 are oxidised to a cystine. The helical transmembrane segment at 91-112 (LYRFCRSLSLCATSLLSILQAV) threads the bilayer. Residues 113 to 132 (TLNPRNSCLEKFKRKSPHYM) are Cytoplasmic-facing. The chain crosses the membrane as a helical span at residues 133 to 154 (LGCLLFLSVFYTFISSPLATYI). Over 155-193 (TAKSNLTSPSFTYITTSCSLAPMSYSFHLTVFILLTSRD) the chain is Extracellular. The helical transmembrane segment at 194–212 (VIFVGLMLLSSGYMVTFLG) threads the bilayer. Over 213-239 (RHKKQSQFLHITSFSLKPSAEKRAMRT) the chain is Cytoplasmic. The chain crosses the membrane as a helical span at residues 240–260 (ILCLMSFFVLMYTLDSIVSYI). Over 261–267 (RSIDDGQ) the chain is Extracellular. Residues 268–288 (IFYCVHIFTAHGYATVSPFLI) traverse the membrane as a helical segment. The Cytoplasmic segment spans residues 289–315 (LSTEKYIINIFRSTFGRMVTIILLRNR).

This sequence belongs to the G-protein coupled receptor 1 family.

Its subcellular location is the cell membrane. Functionally, putative pheromone receptor implicated in the regulation of social and reproductive behavior. This Mus musculus (Mouse) protein is Vomeronasal type-1 receptor 54 (Vmn1r54).